A 362-amino-acid polypeptide reads, in one-letter code: Protein U8 (362 aa).

It belongs to the herpesviridae US22 family.

The sequence is that of Protein U8 (U8) from Human herpesvirus 7 (strain JI) (HHV-7).